We begin with the raw amino-acid sequence, 221 residues long: MTAWLGASYVLPILLVSFVQTNAKPEKTKMDCYKDVKGTIYEYEALTLNGNERIQFKQYPRKHVLFVNVATYCGLTAQYPELNSLQEELKPLGLVVLGFPCNQFGKQGPGENSEILPGLKYVRPGRGYVPNFQLFEKGDVNGEKEQKVFTFLKLSCPHPSEVLGSFRHISWDPVKVHDIRWNFEKFLVGPDGVPVLRWFHRTPISTVKEDILVYLKQLKMK.

The N-terminal stretch at 1–21 (MTAWLGASYVLPILLVSFVQT) is a signal peptide. Cysteine 73 is a catalytic residue.

The protein belongs to the glutathione peroxidase family. In terms of tissue distribution, epididymis.

It is found in the secreted. It catalyses the reaction 2 glutathione + H2O2 = glutathione disulfide + 2 H2O. Protects cells and enzymes from oxidative damage, by catalyzing the reduction of hydrogen peroxide, lipid peroxides and organic hydroperoxide, by glutathione. May constitute a glutathione peroxidase-like protective system against peroxide damage in sperm membrane lipids. The chain is Epididymal secretory glutathione peroxidase (GPX5) from Canis lupus familiaris (Dog).